We begin with the raw amino-acid sequence, 240 residues long: Ribosomal RNA small subunit methyltransferase G (240 aa).

S-adenosyl-L-methionine contacts are provided by residues G79, F84, 130–131, and R149; that span reads AE.

This sequence belongs to the methyltransferase superfamily. RNA methyltransferase RsmG family.

It localises to the cytoplasm. Functionally, specifically methylates the N7 position of a guanine in 16S rRNA. The polypeptide is Ribosomal RNA small subunit methyltransferase G (Lactobacillus helveticus (strain DPC 4571)).